Consider the following 137-residue polypeptide: MTVPEIISDGKSTRRNLQKLLFFGATSATLAIAALTSRSIATRKYIPTFFQLNTKIPTFSSKSEAQAALGLSSGLSLGIFAITTTGFCWALDISSASDFKQRMKTLFNTIDEKEYMNDSDPETNKIIEELEALINKK.

2 helical membrane-spanning segments follow: residues 20–42 (LLFFGATSATLAIAALTSRSIAT) and 69–91 (LGLSSGLSLGIFAITTTGFCWAL).

Belongs to the AIM11 family.

The protein resides in the membrane. The polypeptide is Altered inheritance of mitochondria protein 11 (AIM11) (Candida glabrata (strain ATCC 2001 / BCRC 20586 / JCM 3761 / NBRC 0622 / NRRL Y-65 / CBS 138) (Yeast)).